The following is a 164-amino-acid chain: UPF0304 protein YfbU (164 aa).

It belongs to the UPF0304 family.

The chain is UPF0304 protein YfbU from Shigella flexneri serotype 5b (strain 8401).